Consider the following 182-residue polypeptide: uncharacterized protein (182 aa).

Disordered stretches follow at residues 17–53 (AVSQ…QGSK) and 128–159 (DSLG…PKRS). Residues 42–53 (PQPQCPSAQGSK) show a composition bias toward polar residues. Residues 129–138 (SLGSSASSSS) show a composition bias toward low complexity.

This is an uncharacterized protein from Homo sapiens (Human).